We begin with the raw amino-acid sequence, 251 residues long: Aliphatic sulfonates import ATP-binding protein SsuB (251 aa).

Positions 3-231 constitute an ABC transporter domain; sequence VSINEVSKYF…PRSKNSESFQ (229 aa). 39 to 46 is a binding site for ATP; sequence GPSGCGKS.

It belongs to the ABC transporter superfamily. Aliphatic sulfonates importer (TC 3.A.1.17.2) family. In terms of assembly, the complex is composed of two ATP-binding proteins (SsuB), two transmembrane proteins (SsuC) and a solute-binding protein (SsuA).

Its subcellular location is the cell membrane. It carries out the reaction ATP + H2O + aliphatic sulfonate-[sulfonate-binding protein]Side 1 = ADP + phosphate + aliphatic sulfonateSide 2 + [sulfonate-binding protein]Side 1.. Functionally, part of the ABC transporter complex SsuABC involved in aliphatic sulfonates import. Responsible for energy coupling to the transport system. This is Aliphatic sulfonates import ATP-binding protein SsuB from Bacillus cereus (strain ZK / E33L).